We begin with the raw amino-acid sequence, 297 residues long: Tyrosine recombinase XerD (297 aa).

Residues 1-86 form the Core-binding (CB) domain; that stretch reads MKDSALIELF…AMRKLFQYLY (86 aa). One can recognise a Tyr recombinase domain in the interval 107–291; that stretch reads RLPKYLTEQQ…AKERLKHLHE (185 aa). Catalysis depends on residues R147, K171, H243, R246, and H269. The O-(3'-phospho-DNA)-tyrosine intermediate role is filled by Y278.

This sequence belongs to the 'phage' integrase family. XerD subfamily. As to quaternary structure, forms a cyclic heterotetrameric complex composed of two molecules of XerC and two molecules of XerD.

The protein resides in the cytoplasm. Its function is as follows. Site-specific tyrosine recombinase, which acts by catalyzing the cutting and rejoining of the recombining DNA molecules. The XerC-XerD complex is essential to convert dimers of the bacterial chromosome into monomers to permit their segregation at cell division. It also contributes to the segregational stability of plasmids. The chain is Tyrosine recombinase XerD from Pasteurella multocida (strain Pm70).